Here is a 316-residue protein sequence, read N- to C-terminus: Transaldolase (316 aa).

Lysine 132 functions as the Schiff-base intermediate with substrate in the catalytic mechanism.

It belongs to the transaldolase family. Type 1 subfamily. Homodimer.

It localises to the cytoplasm. The enzyme catalyses D-sedoheptulose 7-phosphate + D-glyceraldehyde 3-phosphate = D-erythrose 4-phosphate + beta-D-fructose 6-phosphate. The protein operates within carbohydrate degradation; pentose phosphate pathway; D-glyceraldehyde 3-phosphate and beta-D-fructose 6-phosphate from D-ribose 5-phosphate and D-xylulose 5-phosphate (non-oxidative stage): step 2/3. Transaldolase is important for the balance of metabolites in the pentose-phosphate pathway. The chain is Transaldolase from Vibrio vulnificus (strain YJ016).